Reading from the N-terminus, the 348-residue chain is [FeFe] hydrogenase maturase subunit HydE (348 aa).

One can recognise a Radical SAM core domain in the interval 49-268 (DEVHIRAIIE…LLPDSNIPAT (220 aa)). Positions 63, 67, and 70 each coordinate [4Fe-4S] cluster. Residues Cys-311, Cys-319, and Cys-322 each coordinate [2Fe-2S] cluster.

Belongs to the radical SAM superfamily. HydE family. In terms of assembly, monomer. [4Fe-4S] cluster serves as cofactor. It depends on [2Fe-2S] cluster as a cofactor.

In terms of biological role, required for the maturation of the [FeFe]-hydrogenase HydA. Catalyzes the reductive cleavage of S-adenosyl-L-methionine (in vitro), suggesting it may contribute to the biosynthesis of an essential sulfur-containing ligand that binds to the hydrogenase active site [2Fe-2S] cluster. This Thermotoga maritima (strain ATCC 43589 / DSM 3109 / JCM 10099 / NBRC 100826 / MSB8) protein is [FeFe] hydrogenase maturase subunit HydE.